Reading from the N-terminus, the 98-residue chain is uncharacterized protein (98 aa).

This is an uncharacterized protein from Bacillus subtilis (strain 168).